Here is a 500-residue protein sequence, read N- to C-terminus: NAD(P)H-quinone oxidoreductase chain 4, chloroplastic (500 aa).

14 helical membrane-spanning segments follow: residues 4–24 (FPWLTIIVIFPISAGSLMLFL), 35–55 (YTICICILELLLTTYAFCYNF), 87–107 (IGTILLTGFITTLATLAAFPV), 113–130 (LFHFLMLAMYSGQIGSFS), 134–154 (LLLFFIMWELELIPVYLLLAM), 167–187 (FILYTAGSSIFLLIGVLGLSL), 211–231 (ILFYIGFLIAFAVKLPIIPLH), 242–262 (HYSTCMLLAGILLKMGAYGLV), 272–292 (AHSMFSPWLLVVGTIQIIYAA), 305–325 (IAYSSVSHMGFIIIGISSITD), 330–350 (GAILQIISHGFIGAALFFLAG), 386–406 (LALPGMSGFVAELIVFFGIIT), 416–436 (ILIIFVMAIGMILTPIYLLSM), and 462–482 (LFLSISILLPIIGIGIYPDFV).

The protein belongs to the complex I subunit 4 family.

The protein localises to the plastid. The protein resides in the chloroplast thylakoid membrane. It catalyses the reaction a plastoquinone + NADH + (n+1) H(+)(in) = a plastoquinol + NAD(+) + n H(+)(out). It carries out the reaction a plastoquinone + NADPH + (n+1) H(+)(in) = a plastoquinol + NADP(+) + n H(+)(out). In Lepidium virginicum (Virginia pepperweed), this protein is NAD(P)H-quinone oxidoreductase chain 4, chloroplastic.